The sequence spans 465 residues: Antithrombin-III (465 aa).

Positions 1 to 32 are cleaved as a signal peptide; the sequence is MYSPGAGSGAAGERKLCLLSLLLIGALGCAIC. Disulfide bonds link Cys-41-Cys-161 and Cys-54-Cys-128. At Thr-64 the chain carries Phosphothreonine. At Ser-69 the chain carries Phosphoserine. Position 82 (Trp-82) interacts with heparin. N-linked (GlcNAc...) asparagine glycosylation occurs at Asn-129. Arg-162 is a heparin binding site. Asn-168 is a glycosylation site (N-linked (GlcNAc...) asparagine). Residue Arg-178 coordinates heparin. N-linked (GlcNAc...) asparagine glycosylation is found at Asn-188 and Asn-225. A disulfide bond links Cys-280 and Cys-463.

This sequence belongs to the serpin family. Forms protease inhibiting heterodimer with TMPRSS7. Phosphorylated by FAM20C in the extracellular medium. Plasma.

The protein resides in the secreted. It localises to the extracellular space. Most important serine protease inhibitor in plasma that regulates the blood coagulation cascade. AT-III inhibits thrombin, matriptase-3/TMPRSS7, as well as factors IXa, Xa and XIa. Its inhibitory activity is greatly enhanced in the presence of heparin. In Mus musculus (Mouse), this protein is Antithrombin-III (Serpinc1).